Reading from the N-terminus, the 552-residue chain is Protein FAM234A (552 aa).

The span at 1–22 (MLDHKDLEAEIHPLKNEERKSQ) shows a compositional bias: basic and acidic residues. The disordered stretch occupies residues 1-40 (MLDHKDLEAEIHPLKNEERKSQENLGNPSKNEDNVKSAPP). Over 1–49 (MLDHKDLEAEIHPLKNEERKSQENLGNPSKNEDNVKSAPPQSRLSRCRA) the chain is Cytoplasmic. Residue serine 21 is modified to Phosphoserine. A helical; Signal-anchor for type II membrane protein membrane pass occupies residues 50–70 (AAFFLSLFLCLFVVFVVSFVI). Over 71–552 (PCPDRPASQR…FSRLRYQSEA (482 aa)) the chain is Extracellular. 4 N-linked (GlcNAc...) asparagine glycosylation sites follow: asparagine 116, asparagine 314, asparagine 389, and asparagine 473.

This sequence belongs to the FAM234 family.

The protein localises to the membrane. This chain is Protein FAM234A, found in Homo sapiens (Human).